The primary structure comprises 650 residues: Acetyl-coenzyme A synthetase (650 aa).

CoA-binding positions include 191-194 (RGGR), Thr311, and Asn335. ATP contacts are provided by residues 387-389 (GEP), 411-416 (DTWWQT), Asp501, and Arg516. A CoA-binding site is contributed by Ser524. Position 527 (Arg527) interacts with ATP. Positions 538, 540, and 543 each coordinate Mg(2+). Arg585 is a CoA binding site. Lys610 is modified (N6-acetyllysine).

Belongs to the ATP-dependent AMP-binding enzyme family. Mg(2+) serves as cofactor. In terms of processing, acetylated. Deacetylation by the SIR2-homolog deacetylase activates the enzyme.

The catalysed reaction is acetate + ATP + CoA = acetyl-CoA + AMP + diphosphate. Catalyzes the conversion of acetate into acetyl-CoA (AcCoA), an essential intermediate at the junction of anabolic and catabolic pathways. AcsA undergoes a two-step reaction. In the first half reaction, AcsA combines acetate with ATP to form acetyl-adenylate (AcAMP) intermediate. In the second half reaction, it can then transfer the acetyl group from AcAMP to the sulfhydryl group of CoA, forming the product AcCoA. This is Acetyl-coenzyme A synthetase from Vibrio vulnificus (strain YJ016).